Consider the following 309-residue polypeptide: Serpentine receptor class gamma-47 (309 aa).

The next 5 membrane-spanning stretches (helical) occupy residues 22–42, 140–160, 190–210, 230–250, and 272–292; these read IVQM…LFLF, FKLY…VLPL, IYSS…IFYI, LITL…ILMA, and ISSD…DVGI.

It belongs to the nematode receptor-like protein srg family.

The protein localises to the membrane. This chain is Serpentine receptor class gamma-47 (srg-47), found in Caenorhabditis elegans.